Reading from the N-terminus, the 161-residue chain is Regulator of ribonuclease activity A (161 aa).

The protein belongs to the RraA family. In terms of assembly, homotrimer. Binds to both RNA-binding sites in the C-terminal region of Rne and to RhlB.

It is found in the cytoplasm. In terms of biological role, globally modulates RNA abundance by binding to RNase E (Rne) and regulating its endonucleolytic activity. Can modulate Rne action in a substrate-dependent manner by altering the composition of the degradosome. Modulates RNA-binding and helicase activities of the degradosome. The protein is Regulator of ribonuclease activity A of Pseudoalteromonas atlantica (strain T6c / ATCC BAA-1087).